Consider the following 320-residue polypeptide: MPMYQVKPYHEGSGSLRVELPTCMYRLPNVHGRTGSPAPSADHVQEASDPSLQALESHQDDILKRLYELKAAVDGLSKMIQTPDADLDVTNIIQADEPAALSTSTVDLNAMLGQDHGALKDIVINANPASPPLSLLVLHRLLCDHYKVLSSVHTHSAVRSVPANLLQCFGEQTRQQPRHEYQLGFTLIWKDVPKTQMKFSVQTMCPIEGEGNIARFLFSLFGQKQDAVNLTLIDSWVDIAIFQLKEGSSKEKAAVFRSMNSALGKTPWLVGDELTVADVVLWSVLRQTGGCGGMAPANVQKWMQACENLAPFHTALKLLQ.

Ser36 bears the Phosphoserine mark. Residues 82–162 (TPDADLDVTN…HTHSAVRSVP (81 aa)) form an interaction with PRKN region. The interval 162–225 (PANLLQCFGE…FLFSLFGQKQ (64 aa)) is interaction with TP53. Residues 220–317 (LFGQKQDAVN…NLAPFHTALK (98 aa)) form the GST C-terminal domain.

Part of the multisynthetase complex (MSC), a multisubunit complex that groups tRNA ligases for Arg (RARS1), Asp (DARS1), Gln (QARS1), Ile (IARS1), Leu (LARS1), Lys (KARS1), Met (MARS1) the bifunctional ligase for Glu and Pro (EPRS1) and the auxiliary subunits AIMP1/p43, AIMP2/p38 and EEF1E1/p18. Interacts (via N-terminus) with KARS1. Interacts with EPRS1. Forms a linear complex that contains MARS1, EEF1E1, EPRS1 and AIMP2 that is at the core of the multisubunit complex. Binds FUBP1 (via C-terminus). Interacts in both its unphosphorylated and phosphorylated forms with p53/TP53 (via N-terminus) in the nucleus following UV irradiation. Interacts (via N-terminus) with PRKN/parkin (via first RING-type domain). Interacts with TARS3. In terms of processing, phosphorylated on serine residues in response to UV irradiation. Ubiquitinated by PRKN, leading to its degradation by the proteasome.

It localises to the cytoplasm. The protein localises to the cytosol. It is found in the nucleus. In terms of biological role, required for assembly and stability of the aminoacyl-tRNA synthase complex. Mediates ubiquitination and degradation of FUBP1, a transcriptional activator of MYC, leading to MYC down-regulation which is required for aveolar type II cell differentiation. Blocks MDM2-mediated ubiquitination and degradation of p53/TP53. Functions as a proapoptotic factor. The sequence is that of Aminoacyl tRNA synthase complex-interacting multifunctional protein 2 (AIMP2) from Bos taurus (Bovine).